The following is a 145-amino-acid chain: Ribosome maturation factor RimP (145 aa).

It belongs to the RimP family.

It is found in the cytoplasm. Its function is as follows. Required for maturation of 30S ribosomal subunits. In Borreliella burgdorferi (strain ZS7) (Borrelia burgdorferi), this protein is Ribosome maturation factor RimP.